We begin with the raw amino-acid sequence, 161 residues long: V-type proton ATPase 16 kDa proteolipid subunit c 2 (161 aa).

Residues 1-15 lie on the Lumenal side of the membrane; the sequence is MSYDLETAEHAAYAP. A helical membrane pass occupies residues 16-36; sequence FFGYMGAASAQIFTVLGAAYG. Over 37 to 58 the chain is Cytoplasmic; sequence TAKSAVGICSMGVMRPELIMKS. The helical transmembrane segment at 59 to 79 threads the bilayer; the sequence is VIPVIMAGIIGIYGLVVAMVL. The Lumenal segment spans residues 80-98; it reads KGKVQAASAGYDLNKGFAH. A helical transmembrane segment spans residues 99-119; that stretch reads LAAGLTCGLCGLGAGYAIGIV. The Cytoplasmic portion of the chain corresponds to 120–137; sequence GDAGVRGTAQQPRLFVGM. A helical membrane pass occupies residues 138 to 158; that stretch reads ILILIFSEVLGLYGMIVALIL. Topologically, residues 159-161 are lumenal; it reads GTS.

The protein belongs to the V-ATPase proteolipid subunit family. As to quaternary structure, V-ATPase is a heteromultimeric enzyme made up of two complexes: the ATP-hydrolytic V1 complex and the proton translocation V0 complex. The V1 complex consists of three catalytic AB heterodimers that form a heterohexamer, three peripheral stalks each consisting of EG heterodimers, one central rotor including subunits D and F, and the regulatory subunits C and H. The proton translocation complex V0 consists of the proton transport subunit a, a ring of proteolipid subunits c9c'', rotary subunit d, subunits e and f, and the accessory subunits vah-19/Ac45 and vah-20/PRR.

The protein localises to the membrane. Proton-conducting pore forming subunit of the V0 complex of vacuolar(H+)-ATPase (V-ATPase), a multisubunit enzyme composed of a peripheral complex (V1) that hydrolyzes ATP and a membrane integral complex (V0) that translocates protons. V-ATPase is responsible for acidifying and maintaining the pH of intracellular compartments and in some cell types, is targeted to the plasma membrane, where it is responsible for acidifying the extracellular environment. Involved in necrotic cell death. Required along with other vacuolar ATPase components for the removal of protein aggregates which form in immature oocytes in the distal gonad. This removal occurs as the oocytes mature and move to the proximal gonad, is triggered by the introduction of sperm through mating and occurs before fertilization. The introduction of sperm triggers V-ATPase accumulation in proximal oocytes and induces lysosomal acidification which leads to engulfing of protein aggregates by lysosomes and subsequent clearance of the aggregates. Lysosomal acidification also leads to changes in mitochondrial morphology and function. Mitochondria in distal immature oocytes are fragmented, produce high levels of reactive oxygen species (ROS) and have high membrane potential, indicative of metabolic inactivity. In contrast, mitochondria in proximal mature oocytes are tubular with lower ROS levels and membrane potential, indicative of an active metabolic state required for aggregate mobilization before clearance. The polypeptide is V-type proton ATPase 16 kDa proteolipid subunit c 2 (Caenorhabditis briggsae).